Consider the following 111-residue polypeptide: Ferredoxin-thioredoxin reductase, catalytic chain (111 aa).

[4Fe-4S] cluster is bound at residue Cys52. Cys54 (nucleophile) is an active-site residue. An intrachain disulfide couples Cys54 to Cys84. Cys71, Cys73, and Cys82 together coordinate [4Fe-4S] cluster.

Belongs to the ferredoxin thioredoxin reductase beta subunit family. In terms of assembly, heterodimer of subunit A (variable subunit) and subunit B (catalytic subunit). Heterodimeric FTR forms a complex with ferredoxin and thioredoxin. Requires [4Fe-4S] cluster as cofactor.

The protein localises to the plastid. It is found in the chloroplast. It catalyses the reaction [thioredoxin]-disulfide + 2 reduced [2Fe-2S]-[ferredoxin] + 2 H(+) = [thioredoxin]-dithiol + 2 oxidized [2Fe-2S]-[ferredoxin]. In terms of biological role, catalytic subunit of the ferredoxin-thioredoxin reductase (FTR), which catalyzes the two-electron reduction of thioredoxins by the electrons provided by reduced ferredoxin. This chain is Ferredoxin-thioredoxin reductase, catalytic chain (ftrB), found in Cyanidium caldarium (Red alga).